The primary structure comprises 911 residues: Valine--tRNA ligase (911 aa).

The short motif at 53-63 (PNVTGTLHLGH) is the 'HIGH' region element. The 'KMSKS' region signature appears at 533–537 (KMSKS). Lysine 536 is an ATP binding site. A coiled-coil region spans residues 845–910 (KEIERLTKEL…NRLAMLRSMQ (66 aa)).

The protein belongs to the class-I aminoacyl-tRNA synthetase family. ValS type 1 subfamily. In terms of assembly, monomer.

Its subcellular location is the cytoplasm. The catalysed reaction is tRNA(Val) + L-valine + ATP = L-valyl-tRNA(Val) + AMP + diphosphate. In terms of biological role, catalyzes the attachment of valine to tRNA(Val). As ValRS can inadvertently accommodate and process structurally similar amino acids such as threonine, to avoid such errors, it has a 'posttransfer' editing activity that hydrolyzes mischarged Thr-tRNA(Val) in a tRNA-dependent manner. In Symbiobacterium thermophilum (strain DSM 24528 / JCM 14929 / IAM 14863 / T), this protein is Valine--tRNA ligase.